We begin with the raw amino-acid sequence, 648 residues long: Nucleoside triphosphatase I (648 aa).

A Helicase ATP-binding domain is found at 48–212 (FIGLKNLNSM…NNLIGLLRPN (165 aa)). 61–68 (WDTGMGKT) serves as a coordination point for ATP. The DEXH box signature appears at 150–153 (DEVH). The region spanning 378 to 541 (YIETCKIILN…KINVIFDLLK (164 aa)) is the Helicase C-terminal domain. The segment at 467-533 (DIIILDMPWN…DIIKDKQGKI (67 aa)) is binding to the cap-specific mRNA (nucleoside-2'-O-)-methyltransferase.

The protein belongs to the helicase family. NPH I subfamily. Monomer. Interacts (via C-terminus) with RAP94 (via N-terminus). Interacts with the cap-specific mRNA (nucleoside-2'-O-)-methyltransferase.

The protein resides in the virion. The enzyme catalyses a ribonucleoside 5'-triphosphate + H2O = a ribonucleoside 5'-diphosphate + phosphate + H(+). Its function is as follows. DNA-dependent ATPase required for providing the needed energy to achieve the termination of early transcripts. Acts in concert with the RAP94 subunit of the virion RNA polymerase and the capping enzyme/VTF to catalyze release of UUUUUNU-containing nascent RNA from the elongation complex. NPH-I must bind ssDNA in order to exhibit ATPase activity. The chain is Nucleoside triphosphatase I (NPH1) from Amsacta (AmEPV).